A 519-amino-acid chain; its full sequence is 6-phosphofructo-2-kinase/fructose-2,6-bisphosphatase 2 (519 aa).

Residues 1–17 are compositionally biased toward polar residues; it reads MSENSTFSTEDSCNSSY. Residues 1–22 are disordered; that stretch reads MSENSTFSTEDSCNSSYKPHAS. At S2 the chain carries N-acetylserine. The segment at 2-251 is 6-phosphofructo-2-kinase; the sequence is SENSTFSTED…VYYLMNIHVH (250 aa). S32 bears the Phosphoserine; by PKA mark. Residue 48–56 participates in ATP binding; sequence GLPARGKTY. Beta-D-fructose 6-phosphate is bound by residues R81 and R105. D131 is a catalytic residue. Positions 133 and 139 each coordinate beta-D-fructose 6-phosphate. C161 is a catalytic residue. 170 to 175 is a binding site for ATP; sequence NILEVK. 3 residues coordinate beta-D-fructose 6-phosphate: K175, R196, and Y200. The fructose-2,6-bisphosphatase stretch occupies residues 252-519; it reads PRTIYLCRHG…PKTQVSIPVV (268 aa). R259 is a beta-D-fructose 2,6-bisphosphate binding site. The Tele-phosphohistidine intermediate role is filled by H260. The beta-D-fructose 2,6-bisphosphate site is built by N266 and G272. Residue E329 is the Proton donor/acceptor of the active site. Y340, R354, K358, Y369, Q395, and R399 together coordinate beta-D-fructose 2,6-bisphosphate. Position 351–354 (351–354) interacts with ATP; it reads FALR. ATP-binding positions include 395–399 and Y431; that span reads QAVMR. Residues 448–493 form a disordered region; that stretch reads HRDKPTHNFPKSQTPVRMRRNSFTPLSSSNTIRRPRNYSVGSRPLK. Residues 456-479 are compositionally biased toward polar residues; sequence FPKSQTPVRMRRNSFTPLSSSNTI. Phosphoserine is present on S469. T471 is modified (phosphothreonine). A Phosphothreonine; by PKC modification is found at T478. A phosphoserine mark is found at S486 and S496. Positions 500–519 are disordered; it reads ALDMQEGADQPKTQVSIPVV. Positions 510-519 are enriched in polar residues; sequence PKTQVSIPVV.

In the C-terminal section; belongs to the phosphoglycerate mutase family. Homodimer. Forms a heterodimer with PFKFB3. Post-translationally, phosphorylation by AMPK stimulates activity. As to expression, highest levels in kidney; also found in heart, brain, spleen, lung, liver, skeletal muscle and testis.

The enzyme catalyses beta-D-fructose 2,6-bisphosphate + H2O = beta-D-fructose 6-phosphate + phosphate. It catalyses the reaction beta-D-fructose 6-phosphate + ATP = beta-D-fructose 2,6-bisphosphate + ADP + H(+). Its activity is regulated as follows. Phosphorylation results in the activation of the kinase activity. Synthesis and degradation of fructose 2,6-bisphosphate. The polypeptide is 6-phosphofructo-2-kinase/fructose-2,6-bisphosphatase 2 (Pfkfb2) (Mus musculus (Mouse)).